The chain runs to 721 residues: Long-chain-fatty-acid--CoA ligase ACSBG1 (721 aa).

The segment at Met1–Glu64 is disordered. Over residues Gln26 to Glu52 the composition is skewed to polar residues. 4 positions are modified to phosphoserine: Ser34, Ser50, Ser53, and Ser70. Residues Thr279–Lys287, Ala469–Ser474, Asp547, and Arg562 each bind ATP. Tyr655 carries the post-translational modification Phosphotyrosine. Lys698 is a binding site for ATP.

Belongs to the ATP-dependent AMP-binding enzyme family. Bubblegum subfamily. In terms of tissue distribution, mainly expressed in brain. Also expressed in adrenal gland and testis. In brain, it is present in cerebral cortical and cerebellar neurons and in steroidogenic cells of the adrenal gland, testis and ovary (at protein level).

The protein resides in the cytoplasm. The protein localises to the cytoplasmic vesicle. Its subcellular location is the microsome. It localises to the endoplasmic reticulum. It is found in the cell membrane. It catalyses the reaction a long-chain fatty acid + ATP + CoA = a long-chain fatty acyl-CoA + AMP + diphosphate. The catalysed reaction is (E)-hexadec-2-enoate + ATP + CoA = (2E)-hexadecenoyl-CoA + AMP + diphosphate. It carries out the reaction hexadecanoate + ATP + CoA = hexadecanoyl-CoA + AMP + diphosphate. In terms of biological role, catalyzes the conversion of fatty acids such as long-chain and very long-chain fatty acids to their active form acyl-CoAs for both synthesis of cellular lipids, and degradation via beta-oxidation. Can activate diverse saturated, monosaturated and polyunsaturated fatty acids. The protein is Long-chain-fatty-acid--CoA ligase ACSBG1 of Mus musculus (Mouse).